We begin with the raw amino-acid sequence, 445 residues long: Phosphoglucosamine mutase (445 aa).

Catalysis depends on S102, which acts as the Phosphoserine intermediate. Mg(2+) contacts are provided by S102, D241, D243, and D245. The residue at position 102 (S102) is a Phosphoserine.

This sequence belongs to the phosphohexose mutase family. The cofactor is Mg(2+). Activated by phosphorylation.

It carries out the reaction alpha-D-glucosamine 1-phosphate = D-glucosamine 6-phosphate. Catalyzes the conversion of glucosamine-6-phosphate to glucosamine-1-phosphate. This chain is Phosphoglucosamine mutase, found in Proteus mirabilis (strain HI4320).